The following is a 186-amino-acid chain: NADH-quinone oxidoreductase subunit B (186 aa).

Residues C44, C45, C110, and C139 each coordinate [4Fe-4S] cluster.

The protein belongs to the complex I 20 kDa subunit family. NDH-1 is composed of 14 different subunits. Subunits NuoB, C, D, E, F, and G constitute the peripheral sector of the complex. [4Fe-4S] cluster serves as cofactor.

It localises to the cell inner membrane. It catalyses the reaction a quinone + NADH + 5 H(+)(in) = a quinol + NAD(+) + 4 H(+)(out). Its function is as follows. NDH-1 shuttles electrons from NADH, via FMN and iron-sulfur (Fe-S) centers, to quinones in the respiratory chain. The immediate electron acceptor for the enzyme in this species is believed to be ubiquinone. Couples the redox reaction to proton translocation (for every two electrons transferred, four hydrogen ions are translocated across the cytoplasmic membrane), and thus conserves the redox energy in a proton gradient. This Leptospira interrogans serogroup Icterohaemorrhagiae serovar copenhageni (strain Fiocruz L1-130) protein is NADH-quinone oxidoreductase subunit B.